Consider the following 450-residue polypeptide: Vimentin beta (450 aa).

Positions 1–81 (MSSRTSTSSY…FGLADAINTE (81 aa)) are head. Polar residues predominate over residues 24–38 (STYSSRQYSSPGRTT). A disordered region spans residues 24–56 (STYSSRQYSSPGRTTSRVSYSSASSTSPSLYMS). The segment covering 39-56 (SRVSYSSASSTSPSLYMS) has biased composition (low complexity). Positions 82-117 (FKANRTNEKAEMQHVNDRFASYIEEVRFLEQQNKIL) are coil 1A. The 309-residue stretch at 89–397 (EKAEMQHVND…NLLEGEEYRI (309 aa)) folds into the IF rod domain. Residues 118–139 (TAELEQMRGKGSSRVGDLYEDE) are linker 1. The interval 140–231 (MRELRRQVDQ…KLHDEELAEL (92 aa)) is coil 1B. Positions 232–254 (QMQIQERHVQIDMEVAKPDLTAA) are linker 12. Positions 255–393 (LRDVRQQYET…ATYRNLLEGE (139 aa)) are coil 2. The interval 394–450 (EYRITTPFPNLSSLSLRESMKEIRPAMDSLSKKVVIKTIETRDGHIINQSTQKDNLE) is tail.

The protein belongs to the intermediate filament family. As to quaternary structure, homomer. One of the most prominent phosphoproteins in various cells of mesenchymal origin. Phosphorylation is enhanced during cell division, at which time vimentin filaments are significantly reorganized. Expressed in low amounts in retina, optic nerve, brain, and spinal cord and in very high amounts in eye lens.

Its function is as follows. Vimentins are class-III intermediate filaments found in various non-epithelial cells, especially mesenchymal cells. Vimentin is attached to the nucleus, endoplasmic reticulum, and mitochondria, either laterally or terminally. The polypeptide is Vimentin beta (Carassius auratus (Goldfish)).